The primary structure comprises 126 residues: Large-conductance mechanosensitive channel (126 aa).

Transmembrane regions (helical) follow at residues 14 to 34 and 66 to 86; these read VIDL…VNSL and FITT…LVVV.

Belongs to the MscL family. In terms of assembly, homopentamer.

It localises to the cell membrane. In terms of biological role, channel that opens in response to stretch forces in the membrane lipid bilayer. May participate in the regulation of osmotic pressure changes within the cell. The polypeptide is Large-conductance mechanosensitive channel (Roseiflexus sp. (strain RS-1)).